The chain runs to 216 residues: ATP synthase subunit C lysine N-methyltransferase (216 aa).

Methionine 1 bears the N-acetylmethionine mark. Positions 1 to 12 (MERGETPEEERQ) are enriched in basic and acidic residues. Residues 1-25 (MERGETPEEERQSGCVLPTSPESDS) are disordered. A helical membrane pass occupies residues 31 to 50 (WGFLITGVIGGALVTVYAVT). Positions 51–85 (TPFIAPALRKVCLPFVPATSRQVENVVKMLQHRRG) are required for mitochondrial location.

The protein belongs to the ANT/ATPSC lysine N-methyltransferase family.

The protein localises to the mitochondrion membrane. The enzyme catalyses L-lysyl-[protein] + 3 S-adenosyl-L-methionine = N(6),N(6),N(6)-trimethyl-L-lysyl-[protein] + 3 S-adenosyl-L-homocysteine + 3 H(+). Functionally, mitochondrial protein-lysine N-methyltransferase that trimethylates ATP synthase subunit C, ATP5MC1 and ATP5MC2. Trimethylation is required for proper incorporation of the C subunit into the ATP synthase complex and mitochondrial respiration. Promotes chronic pain. Involved in persistent inflammatory and neuropathic pain: methyltransferase activity in the mitochondria of sensory neurons promotes chronic pain via a pathway that depends on the production of reactive oxygen species (ROS) and on the engagement of spinal cord microglia. This chain is ATP synthase subunit C lysine N-methyltransferase (Atpsckmt), found in Rattus norvegicus (Rat).